The primary structure comprises 239 residues: IkB-like protein (239 aa).

ANK repeat units follow at residues 48–80, 87–118, 124–153, and 158–187; these read SKIT…EIIS, DGNS…GIKV, NGIT…NPNQ, and KGFN…KPLF. A Nuclear localization signal motif is present at residues 81–87; sequence HYRRDKD. Residues 203-214 carry the Nuclear localization signal motif; sequence KKKPKIIITSCE. A PxIxITxC motif; Interaction with host PPP3CA motif is present at residues 206–213; sequence PKIIITSC. The short motif at 228 to 231 is the FLCV motif element; it reads FLCV.

The protein belongs to the asfivirus A238L family. In terms of assembly, interacts with host PPIA. Interacts with host PPP3CA/Calcineurin. Interacts with host RELA/p65; interaction of the 32 kDa form with host RELA results in the formation of a stable complex with NF-kappa-B. Interacts with host PPP3R1. Interacts with host EP300; this interaction inhibits the association of host EP300 with host RELA, JUN and NFATC2. Post-translationally, the protein exists in a 28 kDa and a 32 kDa form, probably due to post-translational modifications which are neither phosphorylation, nor sumoylation.

It localises to the host nucleus. The protein localises to the host cytoplasm. IkB-like protein that inhibits the binding of NF-kappa-B to DNA, thereby downregulating pro-inflammatory cytokine production. Forms a heterodimer with the NF-kappa-B subunit RELA/p65 and prevents the activation of the NF-kappa-B transcription factor. Inhibits calcineurin function, which is required for the induction of nuclear factor of activated T cells (NFAT)-dependent immune response genes. Prevents the binding of substrates to calcineurin without affecting the phosphatase activity. Does not contain the serine residues that are phosphorylated by host IkB kinase and thus is not degraded following stimulation of the NFkB pathway. This chain is IkB-like protein (A238L), found in Ornithodoros (relapsing fever ticks).